We begin with the raw amino-acid sequence, 217 residues long: Large ribosomal subunit protein eL6 (217 aa).

The protein belongs to the eukaryotic ribosomal protein eL6 family. Component of the large ribosomal subunit. May bind IPO9 with low affinity.

It is found in the cytoplasm. Its subcellular location is the cytosol. It localises to the rough endoplasmic reticulum. Functionally, component of the large ribosomal subunit. This Caenorhabditis elegans protein is Large ribosomal subunit protein eL6 (rpl-6).